We begin with the raw amino-acid sequence, 354 residues long: Protein OVEREXPRESSOR OF CATIONIC PEROXIDASE 3 (354 aa).

The Nuclear localization signal 1 signature appears at 63 to 70 (NRKGFVSS). 2 disordered regions span residues 65-98 (KGFV…EDPF) and 151-186 (TGDV…PTKL). Residues 154 to 181 (VDVDVDNDDDDNDDDDNDDDDDDSEEDE) are compositionally biased toward acidic residues. The Nuclear localization signal 2 motif lies at 191–198 (LKRLAYAL). The disordered stretch occupies residues 243–264 (KPPVAAPENSSPDPSPVESLSA). A DNA-binding region (homeobox) is located at residues 286–345 (RWSAQKRVKKAHIETLEKVYRRSKRPTNAVVSSIVQVTNLPRKRVLKWFEDKRAEDGVPD). The Nuclear localization signal 3 signature appears at 293 to 300 (VKKAHIET).

It localises to the nucleus. May modulate chromatin structure by regulation of nucleosome assembly/disassembly. Homeodomain transcription factor that mediates jasmonic acid (JA)-mediated COI1-dependent and abscisic acid (ABA)-mediated PMR4-dependent resistance to infection by necrotrophic fungal pathogens (e.g. B.cinerea and P.cucumerina) and bacterial pathogens (e.g. P.syringae DC3000); this resistance involves at least callose deposition. Required for the P.fluorescens WCS417r-triggered JA-dependent induced systemic resistance (ISR) against both P.syringae DC3000 and H.arabidopsidis. Negative regulator of the ABA-dependent drought resistance. The sequence is that of Protein OVEREXPRESSOR OF CATIONIC PEROXIDASE 3 from Arabidopsis thaliana (Mouse-ear cress).